Here is a 476-residue protein sequence, read N- to C-terminus: Cytochrome c oxidase subunit 1 (476 aa).

A helical membrane pass occupies residues 19–39 (LYYLWFSFLFGSYGFLLSVIL). Glutamate 42 contacts Ca(2+). 8 consecutive transmembrane segments (helical) span residues 61–81 (MIFTIHGIIMIFFNIMPGLFG), 105–125 (ISLLLQPIAFVLVILSTAAEF), 151–171 (VIIFGLLVSGVASIMSSLNFI), 194–214 (LIITSGMLLLTLPVLTGGVLM), 240–260 (LFWFFGHPEVYILILPAFGVI), 278–298 (MILAMGCIAVLGSLVWVHHMY), 310–330 (FTSTTILISIPTGTKVFNWIC), and 345–365 (LLSLLFICTFTFGGTTGVILG). Histidine 66 lines the Fe(II)-heme a pocket. Residue histidine 246 participates in Cu cation binding. The segment at residues 246–250 (HPEVY) is a cross-link (1'-histidyl-3'-tyrosine (His-Tyr)). Tyrosine 250 provides a ligand contact to O2. Residues histidine 295 and histidine 296 each coordinate Cu cation. Residues histidine 374 and aspartate 375 each coordinate Mg(2+). 2 consecutive transmembrane segments (helical) span residues 379 to 399 (VIAHFHFVLSIGAIIGLFTTV) and 415 to 435 (SIVILWSMLFFVGVILTFLPM). Histidine 382 is a binding site for heme a3. Fe(II)-heme a is bound at residue histidine 384. Proline 448 contacts Ca(2+). The chain crosses the membrane as a helical span at residues 455 to 475 (NGWNMICSIGSTMTLFGLLIF).

This sequence belongs to the heme-copper respiratory oxidase family. As to quaternary structure, component of the cytochrome c oxidase (complex IV, CIV), a multisubunit enzyme composed of a catalytic core of 3 subunits and several supernumerary subunits. The complex exists as a monomer or a dimer and forms supercomplexes (SCs) in the inner mitochondrial membrane with ubiquinol-cytochrome c oxidoreductase (cytochrome b-c1 complex, complex III, CIII). It depends on heme as a cofactor. Requires Cu cation as cofactor.

The protein localises to the mitochondrion inner membrane. The enzyme catalyses 4 Fe(II)-[cytochrome c] + O2 + 8 H(+)(in) = 4 Fe(III)-[cytochrome c] + 2 H2O + 4 H(+)(out). Its pathway is energy metabolism; oxidative phosphorylation. Component of the cytochrome c oxidase, the last enzyme in the mitochondrial electron transport chain which drives oxidative phosphorylation. The respiratory chain contains 3 multisubunit complexes succinate dehydrogenase (complex II, CII), ubiquinol-cytochrome c oxidoreductase (cytochrome b-c1 complex, complex III, CIII) and cytochrome c oxidase (complex IV, CIV), that cooperate to transfer electrons derived from NADH and succinate to molecular oxygen, creating an electrochemical gradient over the inner membrane that drives transmembrane transport and the ATP synthase. Cytochrome c oxidase is the component of the respiratory chain that catalyzes the reduction of oxygen to water. Electrons originating from reduced cytochrome c in the intermembrane space (IMS) are transferred via the dinuclear copper A center (CU(A)) of subunit 2 and heme A of subunit 1 to the active site in subunit 1, a binuclear center (BNC) formed by heme A3 and copper B (CU(B)). The BNC reduces molecular oxygen to 2 water molecules using 4 electrons from cytochrome c in the IMS and 4 protons from the mitochondrial matrix. This is Cytochrome c oxidase subunit 1 (MT-CO1) from Plasmodium falciparum.